We begin with the raw amino-acid sequence, 119 residues long: Ribonuclease P protein component (119 aa).

It belongs to the RnpA family. Consists of a catalytic RNA component (M1 or rnpB) and a protein subunit.

It catalyses the reaction Endonucleolytic cleavage of RNA, removing 5'-extranucleotides from tRNA precursor.. Its function is as follows. RNaseP catalyzes the removal of the 5'-leader sequence from pre-tRNA to produce the mature 5'-terminus. It can also cleave other RNA substrates such as 4.5S RNA. The protein component plays an auxiliary but essential role in vivo by binding to the 5'-leader sequence and broadening the substrate specificity of the ribozyme. The sequence is that of Ribonuclease P protein component from Nitrosomonas europaea (strain ATCC 19718 / CIP 103999 / KCTC 2705 / NBRC 14298).